The following is a 106-amino-acid chain: Met repressor (106 aa).

It belongs to the MetJ family. In terms of assembly, homodimer.

Its subcellular location is the cytoplasm. Functionally, this regulatory protein, when combined with SAM (S-adenosylmethionine) represses the expression of the methionine regulon and of enzymes involved in SAM synthesis. This chain is Met repressor, found in Vibrio campbellii (strain ATCC BAA-1116).